A 124-amino-acid chain; its full sequence is Large ribosomal subunit protein uL18 (124 aa).

This sequence belongs to the universal ribosomal protein uL18 family. As to quaternary structure, part of the 50S ribosomal subunit; part of the 5S rRNA/L5/L18/L25 subcomplex. Contacts the 5S and 23S rRNAs.

Functionally, this is one of the proteins that bind and probably mediate the attachment of the 5S RNA into the large ribosomal subunit, where it forms part of the central protuberance. This chain is Large ribosomal subunit protein uL18, found in Aquifex aeolicus (strain VF5).